The primary structure comprises 493 residues: Cytochrome P450 2E1 (493 aa).

Position 298–303 (298–303) interacts with substrate; the sequence is FAGTET. A heme-binding site is contributed by Cys437.

Belongs to the cytochrome P450 family. In terms of assembly, interacts with chaperones HSP70 and HSP90; this interaction is required for initial targeting to mitochondria. It depends on heme as a cofactor. As to expression, highest level in the liver and to a lesser extent in the kidney, with a higher level in the male kidney than in the female.

It localises to the endoplasmic reticulum membrane. The protein resides in the microsome membrane. Its subcellular location is the mitochondrion inner membrane. The enzyme catalyses an organic molecule + reduced [NADPH--hemoprotein reductase] + O2 = an alcohol + oxidized [NADPH--hemoprotein reductase] + H2O + H(+). It catalyses the reaction (5Z,8Z,11Z)-eicosatrienoate + reduced [NADPH--hemoprotein reductase] + O2 = 19-hydroxy-(5Z,8Z,11Z)-eicosatrienoate + oxidized [NADPH--hemoprotein reductase] + H2O + H(+). It carries out the reaction (5Z,8Z,11Z,14Z,17Z)-eicosapentaenoate + reduced [NADPH--hemoprotein reductase] + O2 = 19-hydroxy-(5Z,8Z,11Z,14Z,17Z)-eicosapentaenoate + oxidized [NADPH--hemoprotein reductase] + H2O + H(+). The catalysed reaction is (4Z,7Z,10Z,13Z,16Z,19Z)-docosahexaenoate + reduced [NADPH--hemoprotein reductase] + O2 = 21-hydroxy-(4Z,7Z,10Z,13Z,16Z,19Z)-docosahexaenoate + oxidized [NADPH--hemoprotein reductase] + H2O + H(+). The enzyme catalyses dodecanoate + reduced [NADPH--hemoprotein reductase] + O2 = 11-hydroxydodecanoate + oxidized [NADPH--hemoprotein reductase] + H2O + H(+). It catalyses the reaction tetradecanoate + reduced [NADPH--hemoprotein reductase] + O2 = 13-hydroxytetradecanoate + oxidized [NADPH--hemoprotein reductase] + H2O + H(+). It carries out the reaction 4-nitrophenol + NADPH + O2 + H(+) = 4-nitrocatechol + NADP(+) + H2O. It participates in lipid metabolism; fatty acid metabolism. Its activity is regulated as follows. The omega-1 hydroxylase activity is stimulated by cytochrome b5. Its function is as follows. A cytochrome P450 monooxygenase involved in the metabolism of fatty acids. Mechanistically, uses molecular oxygen inserting one oxygen atom into a substrate, and reducing the second into a water molecule, with two electrons provided by NADPH via cytochrome P450 reductase (NADPH--hemoprotein reductase). Catalyzes the hydroxylation of carbon-hydrogen bonds. Hydroxylates fatty acids specifically at the omega-1 position displaying the highest catalytic activity for saturated fatty acids. May be involved in the oxidative metabolism of xenobiotics. The sequence is that of Cytochrome P450 2E1 (Cyp2e1) from Mus musculus (Mouse).